Reading from the N-terminus, the 157-residue chain is S-ribosylhomocysteine lyase 2 (157 aa).

Positions 54, 58, and 124 each coordinate Fe cation.

The protein belongs to the LuxS family. In terms of assembly, homodimer. Requires Fe cation as cofactor.

It catalyses the reaction S-(5-deoxy-D-ribos-5-yl)-L-homocysteine = (S)-4,5-dihydroxypentane-2,3-dione + L-homocysteine. Involved in the synthesis of autoinducer 2 (AI-2) which is secreted by bacteria and is used to communicate both the cell density and the metabolic potential of the environment. The regulation of gene expression in response to changes in cell density is called quorum sensing. Catalyzes the transformation of S-ribosylhomocysteine (RHC) to homocysteine (HC) and 4,5-dihydroxy-2,3-pentadione (DPD). The sequence is that of S-ribosylhomocysteine lyase 2 from Lactobacillus delbrueckii subsp. bulgaricus (strain ATCC BAA-365 / Lb-18).